The chain runs to 92 residues: Small ribosomal subunit protein uS19 (92 aa).

Belongs to the universal ribosomal protein uS19 family.

Functionally, protein S19 forms a complex with S13 that binds strongly to the 16S ribosomal RNA. The sequence is that of Small ribosomal subunit protein uS19 from Caulobacter vibrioides (strain ATCC 19089 / CIP 103742 / CB 15) (Caulobacter crescentus).